Reading from the N-terminus, the 311-residue chain is Porphobilinogen deaminase (311 aa).

An S-(dipyrrolylmethanemethyl)cysteine modification is found at C242.

The protein belongs to the HMBS family. Monomer. The cofactor is dipyrromethane.

It carries out the reaction 4 porphobilinogen + H2O = hydroxymethylbilane + 4 NH4(+). It participates in porphyrin-containing compound metabolism; protoporphyrin-IX biosynthesis; coproporphyrinogen-III from 5-aminolevulinate: step 2/4. Its function is as follows. Tetrapolymerization of the monopyrrole PBG into the hydroxymethylbilane pre-uroporphyrinogen in several discrete steps. The sequence is that of Porphobilinogen deaminase from Hahella chejuensis (strain KCTC 2396).